The sequence spans 243 residues: 1-(5-phosphoribosyl)-5-[(5-phosphoribosylamino)methylideneamino] imidazole-4-carboxamide isomerase (243 aa).

Residue Asp10 is the Proton acceptor of the active site. Asp129 (proton donor) is an active-site residue.

This sequence belongs to the HisA/HisF family.

Its subcellular location is the cytoplasm. The catalysed reaction is 1-(5-phospho-beta-D-ribosyl)-5-[(5-phospho-beta-D-ribosylamino)methylideneamino]imidazole-4-carboxamide = 5-[(5-phospho-1-deoxy-D-ribulos-1-ylimino)methylamino]-1-(5-phospho-beta-D-ribosyl)imidazole-4-carboxamide. It participates in amino-acid biosynthesis; L-histidine biosynthesis; L-histidine from 5-phospho-alpha-D-ribose 1-diphosphate: step 4/9. This chain is 1-(5-phosphoribosyl)-5-[(5-phosphoribosylamino)methylideneamino] imidazole-4-carboxamide isomerase, found in Nocardia farcinica (strain IFM 10152).